The primary structure comprises 580 residues: Probable inositol transporter 2 (580 aa).

12 consecutive transmembrane segments (helical) span residues glycine 36–isoleucine 56, glutamate 71–alanine 91, phenylalanine 106–valine 126, valine 129–alanine 149, glycine 156–isoleucine 176, tryptophan 189–proline 209, glycine 275–methionine 295, leucine 315–isoleucine 335, leucine 343–tyrosine 363, phenylalanine 452–glycine 472, isoleucine 490–phenylalanine 510, and tryptophan 521–valine 541.

This sequence belongs to the major facilitator superfamily. Sugar transporter (TC 2.A.1.1) family. As to expression, expressed in the tapetum, but not in pollen grains. Detected in leaf vascular tissue and in roots.

It localises to the cell membrane. Inhibited by nickel and to a lesser extent by cobalt. In terms of biological role, plasma membrane inositol-proton symporter. Specific for several inositol epimers, such as myoinositol and scylloinositol. D-chiroinositol, mucoinositol, alloinositol and pinitol are also transported with a lower activity. Not active with galactinol and phytate. The protein is Probable inositol transporter 2 (INT2) of Arabidopsis thaliana (Mouse-ear cress).